The sequence spans 372 residues: PqqA peptide cyclase (372 aa).

The region spanning 4–220 (APPPLSVLLE…ETARRQLGDR (217 aa)) is the Radical SAM core domain. Residues cysteine 18, cysteine 22, and cysteine 25 each contribute to the [4Fe-4S] cluster site. Residues 342–372 (ATAEQESASPAPAFIYRRPERPAAATADPLE) are disordered.

This sequence belongs to the radical SAM superfamily. PqqE family. Interacts with PqqD. The interaction is necessary for activity of PqqE. The cofactor is [4Fe-4S] cluster.

It carries out the reaction [PQQ precursor protein] + S-adenosyl-L-methionine = E-Y cross-linked-[PQQ precursor protein] + 5'-deoxyadenosine + L-methionine + H(+). It participates in cofactor biosynthesis; pyrroloquinoline quinone biosynthesis. Functionally, catalyzes the cross-linking of a glutamate residue and a tyrosine residue in the PqqA protein as part of the biosynthesis of pyrroloquinoline quinone (PQQ). The chain is PqqA peptide cyclase from Xanthomonas euvesicatoria pv. vesicatoria (strain 85-10) (Xanthomonas campestris pv. vesicatoria).